The following is a 739-amino-acid chain: uncharacterized protein (739 aa).

The next 8 helical transmembrane spans lie at 53-73, 90-110, 114-134, 178-198, 421-441, 457-477, 491-511, and 532-552; these read LALG…ALTV, WHLF…AAIP, LMFI…GTFM, TYIL…QLGL, LIWI…VCIV, AFLR…LALM, GLAM…LPAV, and IVYF…SWMY.

The protein belongs to the aromatic acid exporter ArAE (TC 2.A.85) family.

Its subcellular location is the cell membrane. This is an uncharacterized protein from Gluconobacter oxydans (strain 621H) (Gluconobacter suboxydans).